We begin with the raw amino-acid sequence, 514 residues long: MSAEGEPAEAVAETPANSPGEEAAAAAATTDVDVREEQRPEKQSLSASMCRESHWKCLLLSILMFVCLGAVTWCQVTSVTKLSFDSSLKGRSMIYHGSPCSDGYVYIPLAFLAMLYVVYLVECWHCHAKSELQNKADISSVHDQIQRMRQATPCIWWKAISYHFVRRTRQVTRYRHGDAYTTTQVYHERVNTHVAEAEFEYSHCGIKDISKDLLDLERHPATKLKFTKCFSFANVESENSYLTQRARFFTEIEGLDDYMEAREGMQLKNVDFKELVVAYVDLEKQPWYVSHYAFWVAALFMLSWPLRVFIEYRTAHVHYHIEKLLGLEYTASSTGDEPIYRFRMPRVSTLDSTELEWHICTNRQLIPSYSEAVLMDLTDASLCNGYSSCGYRGVLQACEGCNRASSSSSIFSRHAIHSCSGGPSHLSLSTSRFSLCQLHGSHRTGLWRSRSSSLADRGCQDERCCSYSSQLALNENPPTYHDARFFPVLIVHRQEGCQTRNFCLHRSSCMETSL.

The interval 1–40 is disordered; sequence MSAEGEPAEAVAETPANSPGEEAAAAAATTDVDVREEQRP. Transmembrane regions (helical) follow at residues 57–77, 104–124, and 286–306; these read CLLL…CQVT, YVYI…VECW, and PWYV…SWPL.

The protein belongs to the TMEM151 family.

The protein resides in the membrane. This Xenopus tropicalis (Western clawed frog) protein is Transmembrane protein 151B (tmem151b).